A 174-amino-acid polypeptide reads, in one-letter code: Crossover junction endodeoxyribonuclease RuvC (174 aa).

Active-site residues include Asp-8, Glu-69, and Asp-141. Residues Asp-8, Glu-69, and Asp-141 each contribute to the Mg(2+) site.

The protein belongs to the RuvC family. As to quaternary structure, homodimer which binds Holliday junction (HJ) DNA. The HJ becomes 2-fold symmetrical on binding to RuvC with unstacked arms; it has a different conformation from HJ DNA in complex with RuvA. In the full resolvosome a probable DNA-RuvA(4)-RuvB(12)-RuvC(2) complex forms which resolves the HJ. It depends on Mg(2+) as a cofactor.

The protein localises to the cytoplasm. The enzyme catalyses Endonucleolytic cleavage at a junction such as a reciprocal single-stranded crossover between two homologous DNA duplexes (Holliday junction).. Functionally, the RuvA-RuvB-RuvC complex processes Holliday junction (HJ) DNA during genetic recombination and DNA repair. Endonuclease that resolves HJ intermediates. Cleaves cruciform DNA by making single-stranded nicks across the HJ at symmetrical positions within the homologous arms, yielding a 5'-phosphate and a 3'-hydroxyl group; requires a central core of homology in the junction. The consensus cleavage sequence is 5'-(A/T)TT(C/G)-3'. Cleavage occurs on the 3'-side of the TT dinucleotide at the point of strand exchange. HJ branch migration catalyzed by RuvA-RuvB allows RuvC to scan DNA until it finds its consensus sequence, where it cleaves and resolves the cruciform DNA. The polypeptide is Crossover junction endodeoxyribonuclease RuvC (Xanthomonas campestris pv. campestris (strain 8004)).